We begin with the raw amino-acid sequence, 290 residues long: Nucleotide-binding protein Clos_0574 (290 aa).

8–15 (GLSGAGKS) provides a ligand contact to ATP. Position 59–62 (59–62 (DIRG)) interacts with GTP.

The protein belongs to the RapZ-like family.

Its function is as follows. Displays ATPase and GTPase activities. The polypeptide is Nucleotide-binding protein Clos_0574 (Alkaliphilus oremlandii (strain OhILAs) (Clostridium oremlandii (strain OhILAs))).